The sequence spans 147 residues: MALKRIQKELSDLQRDPPAHCSAGPVGDDLFHWQATIMGPPDSAYQGGVFFLTVHFPTDYPFKPPKIAFTTKIYHPNINSNGSICLDILRSQWSPALTVSKVLLSICSLLCDPNPDDPLVPDIAQIYKSDKEKYNRHAREWTQKYAM.

The 147-residue stretch at 1–147 (MALKRIQKEL…AREWTQKYAM (147 aa)) folds into the UBC core domain. Cys85 (glycyl thioester intermediate) is an active-site residue.

Belongs to the ubiquitin-conjugating enzyme family. As to quaternary structure, component of a E3 ubiquitin ligase complex containing UBE2D1, SIAH1, CACYBP/SIP, SKP1, APC and TBL1X. Interacts with RNF11. In terms of processing, autoubiquitinated.

Its subcellular location is the cytoplasm. It catalyses the reaction S-ubiquitinyl-[E1 ubiquitin-activating enzyme]-L-cysteine + [E2 ubiquitin-conjugating enzyme]-L-cysteine = [E1 ubiquitin-activating enzyme]-L-cysteine + S-ubiquitinyl-[E2 ubiquitin-conjugating enzyme]-L-cysteine.. The enzyme catalyses S-ubiquitinyl-[E1 ubiquitin-activating enzyme]-L-cysteine + [acceptor protein]-L-lysine = [E1 ubiquitin-activating enzyme]-L-cysteine + N(6)-monoubiquitinyl-[acceptor protein]-L-lysine.. It participates in protein modification; protein ubiquitination. Functionally, accepts ubiquitin from the E1 complex and catalyzes its covalent attachment to other proteins. In vitro catalyzes 'Lys-48'-linked polyubiquitination. Mediates the selective degradation of short-lived and abnormal proteins. Functions in the E6/E6-AP-induced ubiquitination of p53/TP53. Mediates ubiquitination of PEX5 and auto-ubiquitination of STUB1, TRAF6 and TRIM63/MURF1. Ubiquitinates STUB1-associated HSP90AB1 in vitro. Lacks inherent specificity for any particular lysine residue of ubiquitin. Essential for viral activation of IRF3. Mediates polyubiquitination of CYP3A4. The sequence is that of Ubiquitin-conjugating enzyme E2 D1 (UBE2D1) from Bos taurus (Bovine).